A 289-amino-acid chain; its full sequence is Nucleotide-binding protein FRAAL4592 (289 aa).

13–20 (GLSGAGRS) provides a ligand contact to ATP. A GTP-binding site is contributed by 64–67 (DVRG).

This sequence belongs to the RapZ-like family.

In terms of biological role, displays ATPase and GTPase activities. The polypeptide is Nucleotide-binding protein FRAAL4592 (Frankia alni (strain DSM 45986 / CECT 9034 / ACN14a)).